The primary structure comprises 448 residues: MFPGQGRHTYGGQQSNYSNQQQGYDQGYNQGYGQAYGQEYNQGYDRPSGPPPGQGQYNRPSGPPPGPPPGQGQYNRPSGPPPSQQGQYNRPSGPPPGQYGNNQTRGSGNEQNYGNMHGSGHYSRPPTDSQSFGVENYNYQYSNCSGRKKALLIGINYIGTKNELRGPINDVNNVEQFLLANGYSSDNIVKLTDDQRVQRAIPTRQNILDAIQWLVKDARPNDALFFHYSGHGGQTEDQPDEYGNYDEDDGYDEVIYPLDFETNGFIIDDLLHTMMVKTLPQGCRLTALFDSCHSGSVLDLPYMYSTKGVLKEPNVMKEAGAGLLQSAMAYATGDRSRMLSGLGGVVKTFMNQGKAEKANEYSKQTNTAPCDAISLSGCKDDQTSADSKENGTATGAMSYAFLTVMSQNPNQSYLSLLQNMREILSAKYSQKPQLSASHPIDTNLQFIF.

Residues 1 to 129 form a disordered region; that stretch reads MFPGQGRHTY…GHYSRPPTDS (129 aa). Low complexity predominate over residues 10 to 44; it reads YGGQQSNYSNQQQGYDQGYNQGYGQAYGQEYNQGY. Pro residues predominate over residues 61-70; that stretch reads SGPPPGPPPG. Residues 99-114 show a composition bias toward polar residues; that stretch reads YGNNQTRGSGNEQNYG. Active-site residues include histidine 231 and cysteine 292.

It belongs to the peptidase C14B family.

Functionally, involved in cell death (apoptosis). This is Metacaspase-1 (MCA1) from Candida albicans (strain SC5314 / ATCC MYA-2876) (Yeast).